A 506-amino-acid polypeptide reads, in one-letter code: ATP synthase subunit alpha (506 aa).

G171–T178 provides a ligand contact to ATP.

It belongs to the ATPase alpha/beta chains family. As to quaternary structure, F-type ATPases have 2 components, CF(1) - the catalytic core - and CF(0) - the membrane proton channel. CF(1) has five subunits: alpha(3), beta(3), gamma(1), delta(1), epsilon(1). CF(0) has three main subunits: a(1), b(2) and c(9-12). The alpha and beta chains form an alternating ring which encloses part of the gamma chain. CF(1) is attached to CF(0) by a central stalk formed by the gamma and epsilon chains, while a peripheral stalk is formed by the delta and b chains.

Its subcellular location is the cell inner membrane. The catalysed reaction is ATP + H2O + 4 H(+)(in) = ADP + phosphate + 5 H(+)(out). Its function is as follows. Produces ATP from ADP in the presence of a proton gradient across the membrane. The alpha chain is a regulatory subunit. This is ATP synthase subunit alpha from Anaplasma phagocytophilum (strain HZ).